The following is a 623-amino-acid chain: Chaperone protein DnaK (623 aa).

A Phosphothreonine; by autocatalysis modification is found at Thr174. Disordered regions lie at residues 470–504 (ITIK…KEEV) and 578–623 (GGAQ…DPDK). The span at 481–504 (EEIKKMQKDAEEHAEEDKKRKEEV) shows a compositional bias: basic and acidic residues. Residues 578–604 (GGAQGAAGQAGPQGAQGGQPNNDNGSS) are compositionally biased toward low complexity. The span at 614–623 (GDFHKVDPDK) shows a compositional bias: basic and acidic residues.

The protein belongs to the heat shock protein 70 family.

Functionally, acts as a chaperone. The chain is Chaperone protein DnaK from Lactobacillus gasseri (strain ATCC 33323 / DSM 20243 / BCRC 14619 / CIP 102991 / JCM 1131 / KCTC 3163 / NCIMB 11718 / NCTC 13722 / AM63).